The following is a 423-amino-acid chain: Cytochrome b mRNA maturase bI2 (423 aa).

Over 1–31 the chain is Mitochondrial matrix; sequence MAFRKSNVYLSLVNSYIIDSPQPSSINYWWN. Positions 1–143 are cytochrome b; it reads MAFRKSNVYL…CVYGQMSHWG (143 aa). A helical transmembrane segment spans residues 32 to 52; the sequence is MGSLLGLCLVIQIVTGIFMAM. Residues 53-84 lie on the Mitochondrial intermembrane side of the membrane; that stretch reads HYSSNIELAFSSVEHIMRDVHNGYILRYLHAN. A helical membrane pass occupies residues 85–105; it reads GASFFFMVMFMHMAKGLYYGS. Topologically, residues 106-115 are mitochondrial matrix; sequence YRSPRVTLWN. Residues 116-136 form a helical membrane-spanning segment; that stretch reads VGVIIFILTIATAFLGYCCVY. The Mitochondrial intermembrane segment spans residues 137–153; sequence GQMSHWGNMNIASNMFN. The segment at 144–423 is maturase; it reads NMNIASNMFN…SMKYKLGNYL (280 aa). The helical transmembrane segment at 154–174 threads the bilayer; the sequence is MMKTIYMMMLMLLIYIFYTIM. At 175 to 423 the chain is on the mitochondrial matrix side; the sequence is MRQMMKTKEY…SMKYKLGNYL (249 aa).

The protein in the N-terminal section; belongs to the cytochrome b family. It in the C-terminal section; belongs to the LAGLIDADG endonuclease family.

It localises to the mitochondrion inner membrane. This protein is responsible for splicing and maturation of cytochrome b mRNA. Specifically, it may be responsible for the splicing specificity of the second intron. The protein is Cytochrome b mRNA maturase bI2 (BI2) of Saccharomyces cerevisiae (strain ATCC 204508 / S288c) (Baker's yeast).